Consider the following 1367-residue polypeptide: Mediator of RNA polymerase II transcription subunit 23 (1367 aa).

Residues 1343 to 1367 (PPQALNSGSPAPQSNQVPASLPVTQ) are disordered. The span at 1346-1367 (ALNSGSPAPQSNQVPASLPVTQ) shows a compositional bias: polar residues.

Belongs to the Mediator complex subunit 23 family. Component of the Mediator complex, which is composed of MED1, MED4, MED6, MED7, MED8, MED9, MED10, MED11, MED12, MED13, MED13L, MED14, MED15, MED16, MED17, MED18, MED19, MED20, MED21, MED22, MED23, MED24, MED25, MED26, MED27, MED29, MED30, MED31, CCNC, CDK8 and CDC2L6/CDK11. The MED12, MED13, CCNC and CDK8 subunits form a distinct module termed the CDK8 module. Mediator containing the CDK8 module is less active than Mediator lacking this module in supporting transcriptional activation. Individual preparations of the Mediator complex lacking one or more distinct subunits have been variously termed ARC, CRSP, DRIP, PC2, SMCC and TRAP. Interacts with CEBPB (when not methylated), CTNNB1, and GLI3. Interacts with CDK8 and ELK1.

It is found in the nucleus. Its function is as follows. Component of the Mediator complex, a coactivator involved in the regulated transcription of nearly all RNA polymerase II-dependent genes. Mediator functions as a bridge to convey information from gene-specific regulatory proteins to the basal RNA polymerase II transcription machinery. Mediator is recruited to promoters by direct interactions with regulatory proteins and serves as a scaffold for the assembly of a functional pre-initiation complex with RNA polymerase II and the general transcription factors. Also required for transcriptional activation subsequent to the assembly of the pre-initiation complex. Required for transcriptional activation by adenovirus E1A protein. Required for ELK1-dependent transcriptional activation in response to activated Ras signaling. In Mus musculus (Mouse), this protein is Mediator of RNA polymerase II transcription subunit 23 (Med23).